We begin with the raw amino-acid sequence, 31 residues long: Cliotide T17 (31 aa).

The segment at residues 1–31 (GTVPCGESCVFIPCITGIAGCSCKNKVCYLN) is a cross-link (cyclopeptide (Gly-Asn)). 3 disulfides stabilise this stretch: Cys-5/Cys-21, Cys-9/Cys-23, and Cys-14/Cys-28.

Contains 3 disulfide bonds. In terms of processing, this is a cyclic peptide. As to expression, expressed in root nodules but not in seed.

Its function is as follows. Probably participates in a plant defense mechanism. This chain is Cliotide T17, found in Clitoria ternatea (Butterfly pea).